The chain runs to 428 residues: Kynureninase (428 aa).

Residues Thr-104, Thr-105, Phe-132–Asp-135, Asp-213, His-216, and Tyr-238 contribute to the pyridoxal 5'-phosphate site. The residue at position 239 (Lys-239) is an N6-(pyridoxal phosphate)lysine. Trp-267 and Thr-295 together coordinate pyridoxal 5'-phosphate.

This sequence belongs to the kynureninase family. As to quaternary structure, homodimer. The cofactor is pyridoxal 5'-phosphate.

The enzyme catalyses L-kynurenine + H2O = anthranilate + L-alanine + H(+). It catalyses the reaction 3-hydroxy-L-kynurenine + H2O = 3-hydroxyanthranilate + L-alanine + H(+). It functions in the pathway amino-acid degradation; L-kynurenine degradation; L-alanine and anthranilate from L-kynurenine: step 1/1. The protein operates within cofactor biosynthesis; NAD(+) biosynthesis; quinolinate from L-kynurenine: step 2/3. Functionally, catalyzes the cleavage of L-kynurenine (L-Kyn) and L-3-hydroxykynurenine (L-3OHKyn) into anthranilic acid (AA) and 3-hydroxyanthranilic acid (3-OHAA), respectively. The protein is Kynureninase of Bacillus mycoides (strain KBAB4) (Bacillus weihenstephanensis).